Consider the following 693-residue polypeptide: Protein VP3 (693 aa).

Residues 187–255 form an N7-methyltransferase activity region; the sequence is FMRLLRMRFA…VISELKGLGS (69 aa). The 2'-O-methyltransferase activity stretch occupies residues 256–432; that stretch reads YSEKKISEFG…KRQKIKVTKS (177 aa). Residues 433–559 are N7-methyltransferase activity; that stretch reads LMYNAINTIY…NHIYIIPNAR (127 aa). The interval 560-693 is GTase/RTPase activity; that stretch reads DENNFDTFGS…KMMEIWEVQV (134 aa).

Belongs to the rotavirus VP3 family. As to quaternary structure, interacts with VP1. Interacts with VP2.

The protein localises to the virion. The catalysed reaction is a 5'-end diphospho-ribonucleoside in mRNA + GTP + H(+) = a 5'-end (5'-triphosphoguanosine)-ribonucleoside in mRNA + diphosphate. The enzyme catalyses a 5'-end (5'-triphosphoguanosine)-ribonucleoside in mRNA + S-adenosyl-L-methionine = a 5'-end (N(7)-methyl 5'-triphosphoguanosine)-ribonucleoside in mRNA + S-adenosyl-L-homocysteine. Functionally, multifunctional enzyme involved in mRNA capping. Catalyzes the formation of the 5' cap structure on the viral plus-strand transcripts. Specifically binds to GTP and displays guanylyltransferase and methyltransferase activities. Has affinity for ssRNA but not for dsRNA. Capping activity is non-specific and caps RNAs that initiate with either a G or an A residue. Together with VP1 polymerase, forms a VP1-VP3 complex positioned near the channels situated at each of the five-fold vertices of the core. Following infection, the outermost layer of the virus is lost, leaving a double-layered particle (DLP) made up of the core and VP6 shell. VP1 then catalyzes the transcription of fully conservative plus-strand genomic RNAs that are capped by VP3 and extruded through the DLP's channels into the cytoplasm where they function as mRNAs for translation of viral proteins. DLPs probably have an RNA triphosphatase activity as well, whereas open cores do not. The polypeptide is Protein VP3 (Homo sapiens (Human)).